The sequence spans 170 residues: MKTQMDGHSLGRWSLVLLLLGLVMPLAIVAQVLSYKEAVLHAIDGINQRSSDANLYRILDLDPSLTMDGDPDTPKPVSFTVKETVCPRRTQQSPEDCDFKKDGLVKRCVGTVTLNQARGSFDISCDKDNRRFALLGDFFRKAREKIGEEFKRIVQRIKDFLRNLVPRTES.

The signal sequence occupies residues 1 to 30 (MKTQMDGHSLGRWSLVLLLLGLVMPLAIVA). The propeptide at 31–131 (QVLSYKEAVL…DISCDKDNRR (101 aa)) is cathelin-like domain (CLD). Disulfide bonds link Cys86-Cys97 and Cys108-Cys125. An active core region spans residues 150 to 162 (FKRIVQRIKDFLR).

Belongs to the cathelicidin family. Monomer, homodimer or homotrimer (in vitro). Oligomerizes as tetra- or hexamer in solution (in vitro). In terms of processing, proteolytically cleaved by proteinase PRTN3 into antibacterial peptide LL-37. Proteolytically cleaved by cathepsin CTSG and neutrophil elastase ELANE. Post-translationally, resistant to proteolytic degradation in solution, and when bound to both zwitterionic (mimicking mammalian membranes) and negatively charged membranes (mimicking bacterial membranes). After secretion onto the skin surface, the CAMP gene product is processed by a serine protease-dependent mechanism into multiple novel antimicrobial peptides distinct from and shorter than cathelicidin LL-37. These peptides show enhanced antimicrobial action, acquiring the ability to kill skin pathogens such as S.aureus, E.coli and C.albicans. These peptides have lost the ability to stimulate CXCL8/IL8 release from keratinocytes. The peptides act synergistically, killing bacteria at lower concentrations when present together, and maintain activity at increased salt condition.

The protein resides in the secreted. It localises to the vesicle. Antimicrobial protein that is an integral component of the innate immune system. Binds to bacterial lipopolysaccharides (LPS). Acts via neutrophil N-formyl peptide receptors to enhance the release of CXCL2. Postsecretory processing generates multiple cathelicidin antimicrobial peptides with various lengths which act as a topical antimicrobial defense in sweat on skin. The unprocessed precursor form, cathelicidin antimicrobial peptide, inhibits the growth of Gram-negative E.coli and E.aerogenes with efficiencies comparable to that of the mature peptide LL-37 (in vitro). Its function is as follows. Antimicrobial peptide that is an integral component of the innate immune system. Binds to bacterial lipopolysaccharides (LPS). Causes membrane permeabilization by forming transmembrane pores (in vitro). Causes lysis of E.coli. Exhibits antimicrobial activity against Gram-negative bacteria such as P.aeruginosa, S.typhimurium, E.aerogenes, E.coli and P.syringae, Gram-positive bacteria such as L.monocytogenes, S.epidermidis, S.pyogenes and S.aureus, as well as vancomycin-resistant enterococci (in vitro). Exhibits antimicrobial activity against methicillin-resistant S.aureus, P.mirabilis, and C.albicans in low-salt media, but not in media containing 100 mM NaCl (in vitro). Forms chiral supramolecular assemblies with quinolone signal (PQS) molecules of P.aeruginosa, which may lead to interference of bacterial quorum signaling and perturbance of bacterial biofilm formation. May form supramolecular fiber-like assemblies on bacterial membranes. Induces cytokine and chemokine producation as well as TNF/TNFA and CSF2/GMCSF production in normal human keratinocytes. Exhibits hemolytic activity against red blood cells. In terms of biological role, exhibits antimicrobial activity against E.coli and B.megaterium (in vitro). The chain is Cathelicidin antimicrobial peptide from Pongo pygmaeus (Bornean orangutan).